The sequence spans 207 residues: Guanylate kinase (207 aa).

One can recognise a Guanylate kinase-like domain in the interval 6 to 185 (GLLIVLSGPS…AKERIQSIVE (180 aa)). Residue 13 to 20 (GPSGVGKG) coordinates ATP.

It belongs to the guanylate kinase family.

Its subcellular location is the cytoplasm. It catalyses the reaction GMP + ATP = GDP + ADP. In terms of biological role, essential for recycling GMP and indirectly, cGMP. The sequence is that of Guanylate kinase from Staphylococcus haemolyticus (strain JCSC1435).